Consider the following 59-residue polypeptide: UPF0434 protein Rsph17029_0141 (59 aa).

This sequence belongs to the UPF0434 family.

The polypeptide is UPF0434 protein Rsph17029_0141 (Cereibacter sphaeroides (strain ATCC 17029 / ATH 2.4.9) (Rhodobacter sphaeroides)).